The chain runs to 76 residues: U-scoloptoxin(15)-Ssd3b (76 aa).

A signal peptide spans 1–23 (MEKKIIFLCFLVALLTFPEFISS).

In terms of processing, contains 2 disulfide bonds. As to expression, expressed by the venom gland.

It localises to the secreted. The protein is U-scoloptoxin(15)-Ssd3b of Scolopendra dehaani (Thai centipede).